Reading from the N-terminus, the 322-residue chain is Gluconeogenesis factor (322 aa).

Belongs to the gluconeogenesis factor family.

It is found in the cytoplasm. Its function is as follows. Required for morphogenesis under gluconeogenic growth conditions. In Listeria innocua serovar 6a (strain ATCC BAA-680 / CLIP 11262), this protein is Gluconeogenesis factor.